Here is a 696-residue protein sequence, read N- to C-terminus: Glycosyltransferase GlyA (696 aa).

Residues 1 to 301 (MLVDDKITVI…NQLSRQEESE (301 aa)) form a GT2 domain region. A GT8 domain region spans residues 302–556 (KKAIVLAANY…TELGQNHHLH (255 aa)). UDP contacts are provided by residues 308–313 (AANYGY) and 399–400 (DC). Positions 399, 401, and 518 each coordinate Mn(2+). Residue 518 to 524 (HYLSHRK) participates in UDP binding.

It in the N-terminal section; belongs to the glycosyltransferase 2 family. In the central section; belongs to the glycosyltransferase 8 family.

It participates in protein modification; protein glycosylation. Involved in the polymorphic O-glycosylation of the serine-rich repeat protein PsrP. Catalyzes the fourth step in glycosylation of PsrP in this bacteria. Can transfer the sugar from UDP-galactose to the terminal sugar moiety of PsrP-GlcNAc-Glc-Gal or of PsrP-GlcNAc-Glc-Glc (using truncated substrates with the PsrP SSR1 domain). Has hydrolytic activity against UDP-galactose and to a lesser extent against UDP-glucose. In Streptococcus pneumoniae serotype 4 (strain ATCC BAA-334 / TIGR4), this protein is Glycosyltransferase GlyA.